We begin with the raw amino-acid sequence, 438 residues long: 3-phosphoshikimate 1-carboxyvinyltransferase (438 aa).

Residues K26, S27, and R31 each coordinate 3-phosphoshikimate. K26 serves as a coordination point for phosphoenolpyruvate. Residues G99 and R127 each contribute to the phosphoenolpyruvate site. 3-phosphoshikimate is bound by residues S170, S171, Q172, S199, E314, and H343. Q172 contacts phosphoenolpyruvate. The Proton acceptor role is filled by E314. Phosphoenolpyruvate contacts are provided by R347, R388, and K413.

It belongs to the EPSP synthase family. As to quaternary structure, monomer.

The protein resides in the cytoplasm. It carries out the reaction 3-phosphoshikimate + phosphoenolpyruvate = 5-O-(1-carboxyvinyl)-3-phosphoshikimate + phosphate. It functions in the pathway metabolic intermediate biosynthesis; chorismate biosynthesis; chorismate from D-erythrose 4-phosphate and phosphoenolpyruvate: step 6/7. In terms of biological role, catalyzes the transfer of the enolpyruvyl moiety of phosphoenolpyruvate (PEP) to the 5-hydroxyl of shikimate-3-phosphate (S3P) to produce enolpyruvyl shikimate-3-phosphate and inorganic phosphate. This chain is 3-phosphoshikimate 1-carboxyvinyltransferase, found in Mycobacterium sp. (strain JLS).